The chain runs to 603 residues: Elongation factor 4 (603 aa).

The region spanning 7–189 (VRIRNFCIIA…AVVERVPPPP (183 aa)) is the tr-type G domain. GTP contacts are provided by residues 19-24 (DHGKST) and 136-139 (NKID).

This sequence belongs to the TRAFAC class translation factor GTPase superfamily. Classic translation factor GTPase family. LepA subfamily.

The protein resides in the cell inner membrane. It catalyses the reaction GTP + H2O = GDP + phosphate + H(+). Required for accurate and efficient protein synthesis under certain stress conditions. May act as a fidelity factor of the translation reaction, by catalyzing a one-codon backward translocation of tRNAs on improperly translocated ribosomes. Back-translocation proceeds from a post-translocation (POST) complex to a pre-translocation (PRE) complex, thus giving elongation factor G a second chance to translocate the tRNAs correctly. Binds to ribosomes in a GTP-dependent manner. The protein is Elongation factor 4 of Nostoc sp. (strain PCC 7120 / SAG 25.82 / UTEX 2576).